The following is a 495-amino-acid chain: uncharacterized protein (495 aa).

Residues 1 to 17 (MRTLSLLILFLSTFLFA) form the signal peptide.

This is an uncharacterized protein from Aquifex aeolicus (strain VF5).